Here is a 22-residue protein sequence, read N- to C-terminus: Lantibiotic mutacin B-Ny266 (22 aa).

The segment at residues 3-7 (SWSFC) is a cross-link (lanthionine (Ser-Cys)). Serine 5 bears the 2,3-didehydroalanine (Ser) mark. Residues 8–11 (TPGC) constitute a cross-link (beta-methyllanthionine (Thr-Cys)). A 2,3-didehydrobutyrine modification is found at threonine 14. The lanthionine (Ser-Cys) cross-link spans 16–21 (SFNSYC). The S-(2-aminovinyl)-D-cysteine (Ser-Cys) cross-link spans 19 to 22 (SYCC).

In terms of processing, maturation of lantibiotics involves the enzymatic conversion of Thr, and Ser into dehydrated AA and the formation of thioether bonds with cysteine. The C-terminal lanthionine undergoes decarboxylation. This is followed by membrane translocation and cleavage of the modified precursor. Post-translationally, it is not established whether the 2,3-didehydrobutyrine is the E- or Z-isomer.

Its function is as follows. Lanthionine-containing peptide antibiotic (lantibiotic) active on Gram-positive bacteria. The bactericidal activity of lantibiotics is based on depolarization of energized bacterial cytoplasmic membranes, initiated by the formation of aqueous transmembrane pores. This Streptococcus mutans protein is Lantibiotic mutacin B-Ny266.